A 919-amino-acid polypeptide reads, in one-letter code: Bifunctional uridylyltransferase/uridylyl-removing enzyme (919 aa).

Residues 1–373 form a uridylyltransferase region; the sequence is MTDPKVPRQR…LAGFNAKSRM (373 aa). The interval 374–727 is uridylyl-removing; it reads LKGYTVFGGK…CEFDEERGAT (354 aa). An HD domain is found at 489-611; it reads VDEHTIRAIG…VQSLERLRHL (123 aa). ACT domains lie at 728–811 and 839–919; these read LVTV…LAKR and VIEV…LEPA.

The protein belongs to the GlnD family. Mg(2+) is required as a cofactor.

It carries out the reaction [protein-PII]-L-tyrosine + UTP = [protein-PII]-uridylyl-L-tyrosine + diphosphate. It catalyses the reaction [protein-PII]-uridylyl-L-tyrosine + H2O = [protein-PII]-L-tyrosine + UMP + H(+). With respect to regulation, uridylyltransferase (UTase) activity is inhibited by glutamine, while glutamine activates uridylyl-removing (UR) activity. Modifies, by uridylylation and deuridylylation, the PII regulatory proteins (GlnB and homologs), in response to the nitrogen status of the cell that GlnD senses through the glutamine level. Under low glutamine levels, catalyzes the conversion of the PII proteins and UTP to PII-UMP and PPi, while under higher glutamine levels, GlnD hydrolyzes PII-UMP to PII and UMP (deuridylylation). Thus, controls uridylylation state and activity of the PII proteins, and plays an important role in the regulation of nitrogen assimilation and metabolism. This Erythrobacter litoralis (strain HTCC2594) protein is Bifunctional uridylyltransferase/uridylyl-removing enzyme.